Reading from the N-terminus, the 261-residue chain is ATP synthase subunit a (261 aa).

Helical transmembrane passes span 31 to 51, 64 to 84, 97 to 117, 126 to 146, 166 to 188, 201 to 223, and 235 to 255; these read IAFTNSAMWMVVTLAALLIFM, WQAAVESFTGFVAGMMATNIG, LFMFILIANIMGMMPTGVVGV, LTVTGVLAVISFSIVLVVGFW, IPMIFVIELFSFLIRPFSLGLRL, VLAGFVINGINAGALTVAIVSIP, and ELLVCAIQAYVFALLTSLYLN.

The protein belongs to the ATPase A chain family. In terms of assembly, F-type ATPases have 2 components, CF(1) - the catalytic core - and CF(0) - the membrane proton channel. CF(1) has five subunits: alpha(3), beta(3), gamma(1), delta(1), epsilon(1). CF(0) has three main subunits: a(1), b(2) and c(9-12). The alpha and beta chains form an alternating ring which encloses part of the gamma chain. CF(1) is attached to CF(0) by a central stalk formed by the gamma and epsilon chains, while a peripheral stalk is formed by the delta and b chains.

The protein resides in the cell inner membrane. In terms of biological role, key component of the proton channel; it plays a direct role in the translocation of protons across the membrane. The protein is ATP synthase subunit a of Rhizorhabdus wittichii (strain DSM 6014 / CCUG 31198 / JCM 15750 / NBRC 105917 / EY 4224 / RW1) (Sphingomonas wittichii).